A 42-amino-acid chain; its full sequence is Potassium channel gamma toxin gamma-KTx 1.9 (42 aa).

Disulfide bonds link cysteine 5–cysteine 23, cysteine 11–cysteine 34, cysteine 20–cysteine 39, and cysteine 24–cysteine 41.

The protein belongs to the ergtoxin family. Gamma-KTx 1 subfamily. In terms of tissue distribution, expressed by the venom gland.

The protein resides in the secreted. Its function is as follows. Blocks human voltage-gated potassium channel Kv11.1/KCNH2/ERG1 (IC(50)=16.9 nM). This is Potassium channel gamma toxin gamma-KTx 1.9 from Centruroides tecomanus (Scorpion).